The primary structure comprises 1894 residues: Plexin-A1 (1894 aa).

Residues 1 to 27 form the signal peptide; that stretch reads MPLPPLSSRTLLLLLLLLLRGVWIAIS. The 483-residue stretch at 28–510 folds into the Sema domain; the sequence is SPPAGLGPQP…TEKQVTQVPV (483 aa). The Extracellular segment spans residues 28–1242; that stretch reads SPPAGLGPQP…VYSDSLLTLP (1215 aa). The N-linked (GlcNAc...) asparagine glycan is linked to Asn75. Cystine bridges form between Cys93–Cys102, Cys128–Cys136, Cys284–Cys405, Cys300–Cys356, Cys374–Cys393, Cys513–Cys530, Cys519–Cys561, Cys522–Cys539, Cys533–Cys545, and Cys596–Cys615. N-linked (GlcNAc...) asparagine glycans are attached at residues Asn658, Asn670, and Asn699. 4 consecutive IPT/TIG domains span residues 862–957, 959–1043, 1046–1145, and 1148–1234; these read PKIL…FTFV, PTFY…YNYT, PTIL…FLYY, and PVLE…LQVY. N-linked (GlcNAc...) asparagine glycosylation occurs at Asn1041. Asn1185 and Asn1210 each carry an N-linked (GlcNAc...) asparagine glycan. The helical transmembrane segment at 1243-1263 threads the bilayer; that stretch reads AIVGIGGGGGLLLLVIVAVLI. Positions 1262–1315 form a coiled coil; sequence LIAYKRKSRDADRTLKRLQLQMDNLESRVALECKEAFAELQTDIHELTSDLDGA. Residues 1264-1894 lie on the Cytoplasmic side of the membrane; it reads AYKRKSRDAD…QVVDTMALSS (631 aa).

This sequence belongs to the plexin family. Interacts directly with NRP1 and NRP2. Interacts with PLXN1B. Interacts with FARP2, RND1 and KDR/VEGFR2. Binding of SEMA3A leads to dissociation of FARP2. Interacts with CRMP1, DPYSL2/CRMP2, DPYSL3/CRMP3 and DPYSL4/CRMP4. Interacts (via TIG domains) with TREM2; the interaction mediates SEMA6D binding and signaling through TYROBP. Ubiquitous.

The protein localises to the cell membrane. Its function is as follows. Coreceptor for SEMA3A, SEMA3C, SEMA3F and SEMA6D. Necessary for signaling by class 3 semaphorins and subsequent remodeling of the cytoskeleton. Plays a role in axon guidance, invasive growth and cell migration. Class 3 semaphorins bind to a complex composed of a neuropilin and a plexin. The plexin modulates the affinity of the complex for specific semaphorins, and its cytoplasmic domain is required for the activation of down-stream signaling events in the cytoplasm. Acts as coreceptor of TREM2 for SEMA6D in dendritic cells and is involved in the generation of immune responses and skeletal homeostasis. The sequence is that of Plexin-A1 (Plxna1) from Mus musculus (Mouse).